The following is a 181-amino-acid chain: Putative adenylate kinase (181 aa).

G10, G12, K13, S14, and T15 together coordinate ATP. The tract at residues N35–V58 is NMP. The interval S106–E116 is LID. ATP-binding residues include R107 and K147.

This sequence belongs to the adenylate kinase family. AK6 subfamily. In terms of assembly, interacts with uS11. Not a structural component of 40S pre-ribosomes, but transiently interacts with them by binding to uS11.

The enzyme catalyses AMP + ATP = 2 ADP. It carries out the reaction ATP + H2O = ADP + phosphate + H(+). Functionally, broad-specificity nucleoside monophosphate (NMP) kinase that catalyzes the reversible transfer of the terminal phosphate group between nucleoside triphosphates and monophosphates. Also has ATPase activity. Involved in the late maturation steps of the 30S ribosomal particles, specifically 16S rRNA maturation. While NMP activity is not required for ribosome maturation, ATPase activity is. Associates transiently with small ribosomal subunit protein uS11. ATP hydrolysis breaks the interaction with uS11. May temporarily remove uS11 from the ribosome to enable a conformational change of the ribosomal RNA that is needed for the final maturation step of the small ribosomal subunit. The protein is Putative adenylate kinase of Methanococcus maripaludis (strain C7 / ATCC BAA-1331).